Here is a 624-residue protein sequence, read N- to C-terminus: ADP,ATP carrier protein 1, chloroplastic (624 aa).

A chloroplast-targeting transit peptide spans methionine 1–lysine 79. Alanine 80 is subject to N-acetylalanine. 6 helical membrane passes run valine 108 to phenylalanine 128, alanine 182 to methionine 202, leucine 240 to phenylalanine 260, alanine 315 to asparagine 335, leucine 446 to valine 466, and leucine 545 to alanine 565. The disordered stretch occupies residues serine 579–leucine 624. The segment covering glutamate 602–leucine 624 has biased composition (low complexity).

It belongs to the ADP/ATP translocase tlc (TC 2.A.12.2) family.

It is found in the plastid. Its subcellular location is the chloroplast membrane. In terms of biological role, may function as an ATP importer. The protein is ADP,ATP carrier protein 1, chloroplastic (AATP1) of Arabidopsis thaliana (Mouse-ear cress).